The primary structure comprises 69 residues: Putative antitoxin AF_1481 (69 aa).

The protein belongs to the UPF0330 family.

Its function is as follows. Possibly the antitoxin component of a type II toxin-antitoxin (TA) system. The sequence is that of Putative antitoxin AF_1481 from Archaeoglobus fulgidus (strain ATCC 49558 / DSM 4304 / JCM 9628 / NBRC 100126 / VC-16).